The primary structure comprises 575 residues: uncharacterized protein (575 aa).

Positions 1 to 120 constitute an HTH marR-type domain; it reads MKLIEHYVAL…YNMWLSEVFG (120 aa). A DNA-binding region (H-T-H motif) is located at residues 26 to 49; sequence LTEIADCLFCTERNAKLILHKLEN. The segment at 176–490 is solute-binding region; sequence EPKPHLVHGW…FGFLHLLLSE (315 aa).

The protein in the C-terminal section; belongs to the bacterial solute-binding protein 5 family.

This is an uncharacterized protein from Bacillus subtilis (strain 168).